The primary structure comprises 196 residues: V-type proton ATPase proteolipid subunit (196 aa).

The Lumenal portion of the chain corresponds to 1 to 25 (MFQLLSFLLSGEATAVERIITDACP). The chain crosses the membrane as a helical span at residues 26-46 (VYAPFFGAMGVTAALVFTVMG). At 47 to 72 (AAYGTAKASVGISNMGVMKPDLVIKA) the chain is on the cytoplasmic side. A helical membrane pass occupies residues 73 to 93 (FIPVIFAGVIAIYGLIICVIL). Over 94-111 (VGGIKPNANYTLMKSFTD) the chain is Lumenal. A helical membrane pass occupies residues 112 to 132 (LGAGLTVGLCGLAAGMAIGIV). Over 133-150 (GDSGVRAFGQQPKLYVIM) the chain is Cytoplasmic. The chain crosses the membrane as a helical span at residues 151–171 (MLILIFSEALGLYGLIIGILL). The Lumenal portion of the chain corresponds to 172-196 (SSVSDTYCPGQALVPLNSGNVIGKN).

This sequence belongs to the V-ATPase proteolipid subunit family. In terms of assembly, V-ATPase is a heteromultimeric enzyme composed of a peripheral catalytic V1 complex (main components: subunits A, B, C, D, E, and F) attached to an integral membrane V0 proton pore complex (main component: the proteolipid protein; which is present as a hexamer that forms the proton-conducting pore).

The protein localises to the vacuole membrane. Its function is as follows. Proton-conducting pore forming subunit of the membrane integral V0 complex of vacuolar ATPase. V-ATPase is responsible for acidifying a variety of intracellular compartments in eukaryotic cells. The sequence is that of V-type proton ATPase proteolipid subunit (vatP) from Dictyostelium discoideum (Social amoeba).